The sequence spans 229 residues: MSQPRPLLSPPETEEQLLAQAQQLSGYTLGELAALAGLVTPENLKRDKGWIGVLLEIWLGASAGSKPEQDFAALGVELKTIPVDSLGRPLETTFVCVAPLTGNSGVTWETSHVRHKLKRVLWIPVEGERSIPLAQRRVGSPLLWTPNEEEDRQLREDWEELMDMIVLGQVERITARHGEYLQIRPKAANAKALTEAIGARGERILTLPRGFYLKKNFTSALLARHFLIQ.

This sequence belongs to the MutH family.

Its subcellular location is the cytoplasm. Sequence-specific endonuclease that cleaves unmethylated GATC sequences. It is involved in DNA mismatch repair. The protein is DNA mismatch repair protein MutH of Shigella boydii serotype 18 (strain CDC 3083-94 / BS512).